The following is a 197-amino-acid chain: Nucleoside triphosphate pyrophosphatase (197 aa).

D71 serves as the catalytic Proton acceptor.

It belongs to the Maf family. A divalent metal cation serves as cofactor.

It localises to the cytoplasm. It carries out the reaction a ribonucleoside 5'-triphosphate + H2O = a ribonucleoside 5'-phosphate + diphosphate + H(+). It catalyses the reaction a 2'-deoxyribonucleoside 5'-triphosphate + H2O = a 2'-deoxyribonucleoside 5'-phosphate + diphosphate + H(+). Nucleoside triphosphate pyrophosphatase. May have a dual role in cell division arrest and in preventing the incorporation of modified nucleotides into cellular nucleic acids. The protein is Nucleoside triphosphate pyrophosphatase of Synechococcus sp. (strain JA-3-3Ab) (Cyanobacteria bacterium Yellowstone A-Prime).